A 1074-amino-acid chain; its full sequence is Calcium-transporting ATPase 8, plasma membrane-type (1074 aa).

Residues 1–33 (MTSLLKSSPGRRRGGDVESGKSEHADSDSDTFY) form a disordered region. The Cytoplasmic portion of the chain corresponds to 1-180 (MTSLLKSSPG…NTYPRKKGKG (180 aa)). Basic and acidic residues predominate over residues 13-27 (RGGDVESGKSEHADS). Residues 43 to 54 (RLQQWRKAALVL) are interaction with calmodulin. Residues 181–201 (FLRFLWDACHDLTLIILMVAA) traverse the membrane as a helical segment. The Extracellular segment spans residues 202-219 (VASLALGIKTEGIKEGWY). Residues 220 to 240 (DGGSIAFAVILVIVVTAVSDY) form a helical membrane-spanning segment. Residues 241-369 (KQSLQFQNLN…GEETPLQVRL (129 aa)) are Cytoplasmic-facing. A helical membrane pass occupies residues 370–389 (NGVATFIGSIGLAVAAAVLV). Residues 390–426 (ILLTRYFTGHTKDNNGGPQFVKGKTKVGHVIDDVVKV) lie on the Extracellular side of the membrane. Residues 427 to 444 (LTVAVTIVVVAVPEGLPL) traverse the membrane as a helical segment. Topologically, residues 445 to 840 (AVTLTLAYSM…RWGRSVYANI (396 aa)) are cytoplasmic. Residue D482 is the 4-aspartylphosphate intermediate of the active site. Residues D785 and D789 each coordinate Mg(2+). The chain crosses the membrane as a helical span at residues 841–859 (QKFIQFQLTVNVAALVINV). Topologically, residues 860–870 (VAAISSGDVPL) are extracellular. A helical transmembrane segment spans residues 871-891 (TAVQLLWVNLIMDTLGALALA). Residues 892–911 (TEPPTDHLMGRPPVGRKEPL) are Cytoplasmic-facing. Residues 912–934 (ITNIMWRNLLIQAIYQVSVLLTL) traverse the membrane as a helical segment. At 935–949 (NFRGISILGLEHEVH) the chain is on the extracellular side. The helical transmembrane segment at 950 to 971 (EHATRVKNTIIFNAFVLCQAFN) threads the bilayer. The Cytoplasmic portion of the chain corresponds to 972–989 (EFNARKPDEKNIFKGVIK). Residues 990 to 1011 (NRLFMGIIVITLVLQVIIVEFL) traverse the membrane as a helical segment. Residues 1012-1021 (GKFASTTKLN) lie on the Extracellular side of the membrane. A helical membrane pass occupies residues 1022–1043 (WKQWLICVGIGVISWPLALVGK). The Cytoplasmic segment spans residues 1044-1074 (FIPVPAAPISNKLKVLKFWGKKKNSSGEGSL).

The protein belongs to the cation transport ATPase (P-type) (TC 3.A.3) family. Type IIB subfamily.

It is found in the cell membrane. The catalysed reaction is Ca(2+)(in) + ATP + H2O = Ca(2+)(out) + ADP + phosphate + H(+). With respect to regulation, activated by calmodulin. Functionally, this magnesium-dependent enzyme catalyzes the hydrolysis of ATP coupled with the translocation of calcium from the cytosol out of the cell. This Arabidopsis thaliana (Mouse-ear cress) protein is Calcium-transporting ATPase 8, plasma membrane-type (ACA8).